A 485-amino-acid chain; its full sequence is NADH-quinone oxidoreductase subunit N (485 aa).

Transmembrane regions (helical) follow at residues 8 to 28 (LIALLPLLIVGLTVVVVMLSI), 35 to 55 (FLNATLSVVGLNAALLSLWFV), 75 to 95 (LYTGLVLLASLATCTFAYPWL), 105 to 125 (FYLLVLIAALGGILLANANHL), 127 to 147 (SLFLGIELISLPLFGLVGYAF), 159 to 179 (YTILSAAASSFLLFGMALVYA), 203 to 223 (LLAGLGLMIVGLGFKLSLVPF), 235 to 255 (PAPVSTFLATASKIAIFGVVM), 271 to 291 (VVLGVLAFASILFGNLMALTQ), 297 to 317 (LLGYSSISHLGYLLVALIALK), 326 to 346 (VGVYLAGYLFSSLGAFGVVSL), 374 to 394 (AVMTVMMLSLAGIPMTLGFIG), 408 to 427 (WWLTGAVVVGSAIGLYYYLR), and 455 to 475 (VVVLISALLVLVLGVWPQPLI).

The protein belongs to the complex I subunit 2 family. As to quaternary structure, NDH-1 is composed of 13 different subunits. Subunits NuoA, H, J, K, L, M, N constitute the membrane sector of the complex.

The protein resides in the cell inner membrane. It catalyses the reaction a quinone + NADH + 5 H(+)(in) = a quinol + NAD(+) + 4 H(+)(out). Functionally, NDH-1 shuttles electrons from NADH, via FMN and iron-sulfur (Fe-S) centers, to quinones in the respiratory chain. The immediate electron acceptor for the enzyme in this species is believed to be ubiquinone. Couples the redox reaction to proton translocation (for every two electrons transferred, four hydrogen ions are translocated across the cytoplasmic membrane), and thus conserves the redox energy in a proton gradient. The sequence is that of NADH-quinone oxidoreductase subunit N from Cronobacter sakazakii (strain ATCC BAA-894) (Enterobacter sakazakii).